The sequence spans 489 residues: Mitochondrial distribution and morphology protein 10 (489 aa).

Belongs to the MDM10 family. Component of the ER-mitochondria encounter structure (ERMES) or MDM complex, composed of MMM1, MDM10, MDM12 and MDM34. Associates with the mitochondrial outer membrane sorting assembly machinery SAM(core) complex.

The protein localises to the mitochondrion outer membrane. Functionally, component of the ERMES/MDM complex, which serves as a molecular tether to connect the endoplasmic reticulum and mitochondria. Components of this complex are involved in the control of mitochondrial shape and protein biogenesis and may function in phospholipid exchange. MDM10 is involved in the late assembly steps of the general translocase of the mitochondrial outer membrane (TOM complex). Functions in the TOM40-specific route of the assembly of outer membrane beta-barrel proteins, including the association of TOM40 with the receptor TOM22 and small TOM proteins. Can associate with the SAM(core) complex as well as the MDM12-MMM1 complex, both involved in late steps of the major beta-barrel assembly pathway, that is responsible for biogenesis of all outer membrane beta-barrel proteins. May act as a switch that shuttles between both complexes and channels precursor proteins into the TOM40-specific pathway. Plays a role in mitochondrial morphology and in the inheritance of mitochondria. This chain is Mitochondrial distribution and morphology protein 10, found in Arthroderma otae (strain ATCC MYA-4605 / CBS 113480) (Microsporum canis).